A 209-amino-acid polypeptide reads, in one-letter code: Large ribosomal subunit protein uL4 (209 aa).

Positions 46–71 are disordered; that stretch reads GTSSTKTRSEVRGSSKKPWKQKGTGR. Residues 59 to 71 are compositionally biased toward basic residues; the sequence is SSKKPWKQKGTGR.

The protein belongs to the universal ribosomal protein uL4 family. Part of the 50S ribosomal subunit.

Functionally, one of the primary rRNA binding proteins, this protein initially binds near the 5'-end of the 23S rRNA. It is important during the early stages of 50S assembly. It makes multiple contacts with different domains of the 23S rRNA in the assembled 50S subunit and ribosome. Its function is as follows. Forms part of the polypeptide exit tunnel. The polypeptide is Large ribosomal subunit protein uL4 (Borrelia garinii subsp. bavariensis (strain ATCC BAA-2496 / DSM 23469 / PBi) (Borreliella bavariensis)).